We begin with the raw amino-acid sequence, 493 residues long: Anthranilate synthase component 1 (493 aa).

Residues Ser-48 and 273–275 (PYM) contribute to the L-tryptophan site. 308–309 (GT) lines the chorismate pocket. Glu-335 lines the Mg(2+) pocket. Chorismate is bound by residues Tyr-423, Arg-443, 457–459 (GGG), and Gly-459. Glu-472 lines the Mg(2+) pocket.

It belongs to the anthranilate synthase component I family. As to quaternary structure, heterotetramer consisting of two non-identical subunits: a beta subunit (TrpG) and a large alpha subunit (TrpE). Mg(2+) serves as cofactor.

It carries out the reaction chorismate + L-glutamine = anthranilate + pyruvate + L-glutamate + H(+). It participates in amino-acid biosynthesis; L-tryptophan biosynthesis; L-tryptophan from chorismate: step 1/5. With respect to regulation, feedback inhibited by tryptophan. Part of a heterotetrameric complex that catalyzes the two-step biosynthesis of anthranilate, an intermediate in the biosynthesis of L-tryptophan. In the first step, the glutamine-binding beta subunit (TrpG) of anthranilate synthase (AS) provides the glutamine amidotransferase activity which generates ammonia as a substrate that, along with chorismate, is used in the second step, catalyzed by the large alpha subunit of AS (TrpE) to produce anthranilate. In the absence of TrpG, TrpE can synthesize anthranilate directly from chorismate and high concentrations of ammonia. The sequence is that of Anthranilate synthase component 1 (trpE) from Pseudomonas putida (Arthrobacter siderocapsulatus).